The chain runs to 682 residues: Glutamine--fructose-6-phosphate aminotransferase [isomerizing] 2 (682 aa).

Cysteine 2 (for GATase activity) is an active-site residue. A Glutamine amidotransferase type-2 domain is found at 2–288 (CGIFAYMNYR…DDDIAAVADG (287 aa)). Serine 244 bears the Phosphoserine mark. 2 SIS domains span residues 360 to 499 (HLKE…DRIS) and 531 to 672 (LALE…VDFP). Residues 377–378 (TS), 422–424 (SQS), threonine 427, and histidine 578 each bind substrate.

The catalysed reaction is D-fructose 6-phosphate + L-glutamine = D-glucosamine 6-phosphate + L-glutamate. It functions in the pathway nucleotide-sugar biosynthesis; UDP-N-acetyl-alpha-D-glucosamine biosynthesis; alpha-D-glucosamine 6-phosphate from D-fructose 6-phosphate: step 1/1. In terms of biological role, controls the flux of glucose into the hexosamine pathway. Most likely involved in regulating the availability of precursors for N- and O-linked glycosylation of proteins. This chain is Glutamine--fructose-6-phosphate aminotransferase [isomerizing] 2 (Gfpt2), found in Mus musculus (Mouse).